The following is a 311-amino-acid chain: MTQEIHYSVLLKESVDALVTNADGVYIDGTFGRGGHSRAVLQKLSPQGRLLAFDKDPEAVAYGRELAGSDNRFSMVHDSFVNMASHWASAAHANNWSLSGVLLDLGVSSPQLDQAERGFSFMHDGPLDMRMDNSSGQTAAEWINTAEESELAFVIKEYGEERFARRMARAIVAEREKSPITQTLRLANIVSEANPKWEKGKHPATRAFQAIRIFINRELDDLTATLAQSLEMLPSGGRLVVISFHSLEDRIVKRFMRDQARGKQFPIGMPVTEDMLEKKLKTLGKAQRAGDRELAENIRSRSATLRVAEKL.

Residues 34–36, aspartate 54, phenylalanine 80, aspartate 104, and glutamine 111 contribute to the S-adenosyl-L-methionine site; that span reads GGH.

Belongs to the methyltransferase superfamily. RsmH family.

It is found in the cytoplasm. The enzyme catalyses cytidine(1402) in 16S rRNA + S-adenosyl-L-methionine = N(4)-methylcytidine(1402) in 16S rRNA + S-adenosyl-L-homocysteine + H(+). In terms of biological role, specifically methylates the N4 position of cytidine in position 1402 (C1402) of 16S rRNA. This Teredinibacter turnerae (strain ATCC 39867 / T7901) protein is Ribosomal RNA small subunit methyltransferase H.